Here is a 354-residue protein sequence, read N- to C-terminus: tRNA N6-adenosine threonylcarbamoyltransferase (354 aa).

The Fe cation site is built by His111 and His115. Residues Leu134–Gly138, Asp167, Gly180, and Asn279 contribute to the substrate site. Asp319 is a Fe cation binding site.

It belongs to the KAE1 / TsaD family. It depends on Fe(2+) as a cofactor.

It is found in the cytoplasm. The enzyme catalyses L-threonylcarbamoyladenylate + adenosine(37) in tRNA = N(6)-L-threonylcarbamoyladenosine(37) in tRNA + AMP + H(+). Required for the formation of a threonylcarbamoyl group on adenosine at position 37 (t(6)A37) in tRNAs that read codons beginning with adenine. Is involved in the transfer of the threonylcarbamoyl moiety of threonylcarbamoyl-AMP (TC-AMP) to the N6 group of A37, together with TsaE and TsaB. TsaD likely plays a direct catalytic role in this reaction. The protein is tRNA N6-adenosine threonylcarbamoyltransferase of Neisseria meningitidis serogroup C / serotype 2a (strain ATCC 700532 / DSM 15464 / FAM18).